The primary structure comprises 181 residues: Lysozyme A (181 aa).

Positions 1–19 (MRIAFFLLVLAVIIGFAYG) are cleaved as a signal peptide. Residues 139–181 (LTDSRPLGPFNVTESEMAQLFIDHEIAMAQCEAEKTCNGFDLE) constitute a propeptide that is removed on maturation.

This sequence belongs to the dictyostelium lysozyme family. Contains six disulfide bonds.

The protein resides in the cytoplasmic vesicle lumen. The catalysed reaction is Hydrolysis of 1,4-beta-linkages between N-acetylmuramic acid and N-acetyl-D-glucosamine residues in a peptidoglycan.. In terms of biological role, has antibacterial activity against the Gram-positive bacteria B.subtilis, B.megaterium and M.luteus. No antibacterial activity detected against the Gram-positive bacterium S.aureus or against the Gram-negative bacterium E.coli. Lacks chitinase activity. The chain is Lysozyme A from Dictyostelium discoideum (Social amoeba).